Consider the following 432-residue polypeptide: MTQLEYALSGIITKEMKIVADYEGVSEEFILEEVKKGEIVIPANVNHINLVPKGIGKGLSTKVNANIGTSDAFPEIGKEIEKLKVAIDAGADAVMDLSTGGDVNKSRREIIKNSSVPVGTVPMYQAAVESISRYGSIVAMPEEFIFKVIEEQAKDGVDFITVHCGLTLESLKRLKDNKRIMNVVSRGGAFTIAWMIHNEKENPLYQYFDRLLDIAKKYDVTLSLGDGLRPGCLEDATDAAQIQELIILGELVKKAREAGVQVMVEGPGHVPIDQIEANVKLQKSLCHNAPFYVLGPVVTDIAPGYDHITAAIGGAIAAFAGADFLCYVTPAEHLGLPDIQDVKEGVIAAKIAAHAADIAKGIKKAREKDLAMAKARANLDWNEQIQLSIDPEKAEKYRVTKNKPNVETCSMCGKFCAMQIVSEYLGTPTTSC.

Residues Asn66, Met95, Tyr124, His163, 185–187 (SRG), 226–229 (DGLR), and Glu265 contribute to the substrate site. His269 contributes to the Zn(2+) binding site. Substrate is bound at residue Tyr292. Zn(2+) is bound at residue His333. Cys409, Cys412, and Cys416 together coordinate [4Fe-4S] cluster.

This sequence belongs to the ThiC family. [4Fe-4S] cluster is required as a cofactor.

The catalysed reaction is 5-amino-1-(5-phospho-beta-D-ribosyl)imidazole + S-adenosyl-L-methionine = 4-amino-2-methyl-5-(phosphooxymethyl)pyrimidine + CO + 5'-deoxyadenosine + formate + L-methionine + 3 H(+). It participates in cofactor biosynthesis; thiamine diphosphate biosynthesis. Catalyzes the synthesis of the hydroxymethylpyrimidine phosphate (HMP-P) moiety of thiamine from aminoimidazole ribotide (AIR) in a radical S-adenosyl-L-methionine (SAM)-dependent reaction. The chain is Phosphomethylpyrimidine synthase from Caldanaerobacter subterraneus subsp. tengcongensis (strain DSM 15242 / JCM 11007 / NBRC 100824 / MB4) (Thermoanaerobacter tengcongensis).